A 307-amino-acid chain; its full sequence is Coproporphyrin III ferrochelatase (307 aa).

Residues Tyr12, Arg29, 45–46 (RY), Ser53, and Tyr124 contribute to the Fe-coproporphyrin III site. Fe(2+) is bound by residues His181 and Glu263.

Belongs to the ferrochelatase family.

It is found in the cytoplasm. The enzyme catalyses Fe-coproporphyrin III + 2 H(+) = coproporphyrin III + Fe(2+). Its pathway is porphyrin-containing compound metabolism; protoheme biosynthesis. In terms of biological role, involved in coproporphyrin-dependent heme b biosynthesis. Catalyzes the insertion of ferrous iron into coproporphyrin III to form Fe-coproporphyrin III. The protein is Coproporphyrin III ferrochelatase of Staphylococcus saprophyticus subsp. saprophyticus (strain ATCC 15305 / DSM 20229 / NCIMB 8711 / NCTC 7292 / S-41).